The chain runs to 340 residues: 4-amino-5-hydroxymethyl-2-methylpyrimidine phosphate synthase THI13 (340 aa).

K62 carries the N6-(pyridoxal phosphate)lysine modification. The active site involves H66. 115 to 118 (GEFG) provides a ligand contact to pyridoxal 5'-phosphate. Positions 195 to 199 (CCCFC) match the CCCFC; essential for catalytic activity, may be the site of iron coordination motif.

This sequence belongs to the NMT1/THI5 family. As to quaternary structure, homodimer. Fe cation serves as cofactor.

It carries out the reaction N(6)-(pyridoxal phosphate)-L-lysyl-[4-amino-5-hydroxymethyl-2-methylpyrimidine phosphate synthase] + L-histidyl-[4-amino-5-hydroxymethyl-2-methylpyrimidine phosphate synthase] + 2 Fe(3+) + 4 H2O = L-lysyl-[4-amino-5-hydroxymethyl-2-methylpyrimidine phosphate synthase] + (2S)-2-amino-5-hydroxy-4-oxopentanoyl-[4-amino-5-hydroxymethyl-2-methylpyrimidine phosphate synthase] + 4-amino-2-methyl-5-(phosphooxymethyl)pyrimidine + 3-oxopropanoate + 2 Fe(2+) + 2 H(+). It participates in cofactor biosynthesis; thiamine diphosphate biosynthesis. In terms of biological role, responsible for the formation of the pyrimidine heterocycle in the thiamine biosynthesis pathway. Catalyzes the formation of hydroxymethylpyrimidine phosphate (HMP-P) from histidine and pyridoxal phosphate (PLP). The protein uses PLP and the active site histidine to form HMP-P, generating an inactive enzyme. The enzyme can only undergo a single turnover, which suggests it is a suicide enzyme. The sequence is that of 4-amino-5-hydroxymethyl-2-methylpyrimidine phosphate synthase THI13 from Saccharomyces cerevisiae (strain ATCC 204508 / S288c) (Baker's yeast).